The chain runs to 889 residues: Translation initiation factor IF-2 (889 aa).

Disordered stretches follow at residues 47-85 (GHLK…AKSV) and 206-302 (AEAA…FTKP). 3 stretches are compositionally biased toward basic and acidic residues: residues 52 to 61 (QHGDESEAKP), 214 to 241 (AAKK…KEVV), and 252 to 263 (AEDKSDSADESG). In terms of domain architecture, tr-type G spans 389–558 (TRAPVVTIMG…LLQSEVLELT (170 aa)). Residues 398 to 405 (GHVDHGKT) are G1. Residue 398 to 405 (GHVDHGKT) coordinates GTP. The interval 423 to 427 (GITQH) is G2. A G3 region spans residues 444–447 (DTPG). GTP is bound by residues 444–448 (DTPGH) and 498–501 (NKMD). Positions 498–501 (NKMD) are G4. Positions 534 to 536 (SAK) are G5.

It belongs to the TRAFAC class translation factor GTPase superfamily. Classic translation factor GTPase family. IF-2 subfamily.

Its subcellular location is the cytoplasm. Its function is as follows. One of the essential components for the initiation of protein synthesis. Protects formylmethionyl-tRNA from spontaneous hydrolysis and promotes its binding to the 30S ribosomal subunits. Also involved in the hydrolysis of GTP during the formation of the 70S ribosomal complex. This Colwellia psychrerythraea (strain 34H / ATCC BAA-681) (Vibrio psychroerythus) protein is Translation initiation factor IF-2.